A 700-amino-acid polypeptide reads, in one-letter code: Elongation factor G 2 (700 aa).

Residues 8-290 (ERYRNIGISA…AVVDYLPSPI (283 aa)) enclose the tr-type G domain. GTP contacts are provided by residues 17–24 (AHIDAGKT), 88–92 (DTPGH), and 142–145 (NKMD).

This sequence belongs to the TRAFAC class translation factor GTPase superfamily. Classic translation factor GTPase family. EF-G/EF-2 subfamily.

The protein resides in the cytoplasm. Its function is as follows. Catalyzes the GTP-dependent ribosomal translocation step during translation elongation. During this step, the ribosome changes from the pre-translocational (PRE) to the post-translocational (POST) state as the newly formed A-site-bound peptidyl-tRNA and P-site-bound deacylated tRNA move to the P and E sites, respectively. Catalyzes the coordinated movement of the two tRNA molecules, the mRNA and conformational changes in the ribosome. In Ralstonia nicotianae (strain ATCC BAA-1114 / GMI1000) (Ralstonia solanacearum), this protein is Elongation factor G 2 (fusB).